The sequence spans 139 residues: Large ribosomal subunit protein uL14 (139 aa).

It belongs to the universal ribosomal protein uL14 family.

The protein is Large ribosomal subunit protein uL14 (RPL23) of Syntrichia ruralis (Great hairy screw-moss).